Here is a 169-residue protein sequence, read N- to C-terminus: Peptide deformylase (169 aa).

Residues cysteine 91 and histidine 133 each contribute to the Fe cation site. Residue glutamate 134 is part of the active site. Position 137 (histidine 137) interacts with Fe cation.

This sequence belongs to the polypeptide deformylase family. The cofactor is Fe(2+).

The catalysed reaction is N-terminal N-formyl-L-methionyl-[peptide] + H2O = N-terminal L-methionyl-[peptide] + formate. Functionally, removes the formyl group from the N-terminal Met of newly synthesized proteins. Requires at least a dipeptide for an efficient rate of reaction. N-terminal L-methionine is a prerequisite for activity but the enzyme has broad specificity at other positions. The chain is Peptide deformylase from Salmonella typhi.